A 427-amino-acid polypeptide reads, in one-letter code: UPF0229 protein KPN78578_11640 (427 aa).

A disordered region spans residues 72–109; the sequence is RNRVHPGNDHFVQNDRIERPQGGGGGGGSGQGQASADG. Over residues 77–90 the composition is skewed to basic and acidic residues; the sequence is PGNDHFVQNDRIER. The segment covering 92–102 has biased composition (gly residues); sequence QGGGGGGGSGQ.

This sequence belongs to the UPF0229 family.

This is UPF0229 protein KPN78578_11640 from Klebsiella pneumoniae subsp. pneumoniae (strain ATCC 700721 / MGH 78578).